A 228-amino-acid chain; its full sequence is MKSTRPFHPTPVITIDGPTASGKGTVAALLAAHLGFHLLDSGALYRLAALASVRYGIAAEDIDALVKLIDDLHITFREGCAQLDGVDVSNDIRAEAVGNRASAIAVHGPVRSALVARQRAFRKTPGLVADGRDMGTVIFPDAVLKVFLTASAEARAARRHKQLMQKGFSANIDDLLRDLRERDARDSNRAAAPLKPAADARLLDTSALSVDEAVDQVLQWYRALGQPA.

17–25 (GPTASGKGT) is an ATP binding site.

This sequence belongs to the cytidylate kinase family. Type 1 subfamily.

Its subcellular location is the cytoplasm. The enzyme catalyses CMP + ATP = CDP + ADP. It carries out the reaction dCMP + ATP = dCDP + ADP. This chain is Cytidylate kinase, found in Burkholderia ambifaria (strain MC40-6).